The primary structure comprises 954 residues: Glycine dehydrogenase (decarboxylating) (954 aa).

Lysine 704 is modified (N6-(pyridoxal phosphate)lysine).

This sequence belongs to the GcvP family. The glycine cleavage system is composed of four proteins: P, T, L and H. Requires pyridoxal 5'-phosphate as cofactor.

It catalyses the reaction N(6)-[(R)-lipoyl]-L-lysyl-[glycine-cleavage complex H protein] + glycine + H(+) = N(6)-[(R)-S(8)-aminomethyldihydrolipoyl]-L-lysyl-[glycine-cleavage complex H protein] + CO2. The glycine cleavage system catalyzes the degradation of glycine. The P protein binds the alpha-amino group of glycine through its pyridoxal phosphate cofactor; CO(2) is released and the remaining methylamine moiety is then transferred to the lipoamide cofactor of the H protein. The polypeptide is Glycine dehydrogenase (decarboxylating) (Vibrio parahaemolyticus serotype O3:K6 (strain RIMD 2210633)).